Here is a 155-residue protein sequence, read N- to C-terminus: MVCTPVEKSPNLLPTTSKANSKAGLAPLLLTVVELIRQLMEAQVIRRMEQDCLSESELEQASESLQKLEEQVLNLCHIFEIEPADLNINLGDVGTLLPSPGSYYPGEIGNKPSVLELLDRLLNTGIVVDGEIDLGLAQLNLIHAKLRLVLTSRPL.

This sequence belongs to the gas vesicle GvpK family.

The protein resides in the gas vesicle. In terms of biological role, might be involved in nucleating gas vesicle formation. Gas vesicles (GV) are hollow, gas filled proteinaceous nanostructures. During planktonic growth they allow positioning of the organism at a favorable depth for light or nutrient acquisition. Its function is as follows. Cluster expression in E.coli (gvpA1-gvpA2-gvpC-gvpN-gvpJ-gvpK-gvpF-gvpG-gvpV-gvpW) allows cells to float and produces irregularly shaped gas vesicles. The chain is Gas vesicle protein K from Nostoc sp. (strain PCC 7120 / SAG 25.82 / UTEX 2576).